Here is a 1135-residue protein sequence, read N- to C-terminus: Vinculin (1135 aa).

The segment at 2–835 (PVFHTRTIES…GAVAKVREAF (834 aa)) is N-terminal globular head. Phosphotyrosine is present on Y100. A talin-interaction region spans residues 168–208 (MTKMAKMIDERQQELTHQEHRVMLVNSMNTVKELLPVLISA). 3 tandem repeats follow at residues 259 to 369 (ASKD…KVEN), 370 to 479 (AARK…KTNR), and 480 to 589 (AVAN…RMQE). The tract at residues 259–589 (ASKDTEAMKR…LKDLKARMQE (331 aa)) is 3 X 112 AA tandem repeats. Y537 and Y822 each carry phosphotyrosine. Residues 836-878 (QPQEPDFPPPPPDLEHLHLTDELAPPKPPLPEGEVPPPRPPPP) are linker (Pro-rich). A disordered region spans residues 837-888 (PQEPDFPPPPPDLEHLHLTDELAPPKPPLPEGEVPPPRPPPPEEKDEEFPEQ). Pro residues predominate over residues 860 to 876 (PPKPPLPEGEVPPPRPP). A C-terminal tail region spans residues 879–1135 (EEKDEEFPEQ…RWVRKTPWYQ (257 aa)). Facilitates phospholipid membrane insertion regions lie at residues 1004-1047 (RLVR…KRIR) and 1121-1135 (AGFTLRWVRKTPWYQ). Y1134 carries the post-translational modification Phosphotyrosine; by SRC-type Tyr-kinases.

This sequence belongs to the vinculin/alpha-catenin family. Exhibits self-association properties. Interacts with APBB1IP, NRAP and TLN1. Interacts with CTNNB1 and this interaction is necessary for its localization to the cell-cell junctions and for its function in regulating cell surface expression of E-cadherin. Phosphorylated; on serines, threonines and tyrosines. Phosphorylation on Tyr-1134 in activated platelets affects head-tail interactions and cell spreading but has no effect on actin binding nor on localization to focal adhesion plaques. In terms of processing, acetylated; mainly by myristic acid but also by a small amount of palmitic acid. As to expression, isoform Metavinculin is muscle-specific.

Its subcellular location is the cell membrane. It localises to the cell junction. The protein localises to the adherens junction. It is found in the focal adhesion. The protein resides in the cytoplasm. Its subcellular location is the cytoskeleton. It localises to the sarcolemma. The protein localises to the cell projection. It is found in the podosome. Actin filament (F-actin)-binding protein involved in cell-matrix adhesion and cell-cell adhesion. Regulates cell-surface E-cadherin expression and potentiates mechanosensing by the E-cadherin complex. May also play important roles in cell morphology and locomotion. This chain is Vinculin (VCL), found in Gallus gallus (Chicken).